Reading from the N-terminus, the 326-residue chain is Ribosomal RNA small subunit methyltransferase H (326 aa).

Residues 35–37, aspartate 53, phenylalanine 80, aspartate 101, and glutamine 108 each bind S-adenosyl-L-methionine; that span reads GGY. Positions 260 to 306 are disordered; sequence EGVSRHLPQASNAGAGNPPPSFQAVSRRAVKPLDAETRVNPRSRSAR.

It belongs to the methyltransferase superfamily. RsmH family.

It is found in the cytoplasm. It catalyses the reaction cytidine(1402) in 16S rRNA + S-adenosyl-L-methionine = N(4)-methylcytidine(1402) in 16S rRNA + S-adenosyl-L-homocysteine + H(+). In terms of biological role, specifically methylates the N4 position of cytidine in position 1402 (C1402) of 16S rRNA. This is Ribosomal RNA small subunit methyltransferase H from Rhodospirillum rubrum (strain ATCC 11170 / ATH 1.1.1 / DSM 467 / LMG 4362 / NCIMB 8255 / S1).